The chain runs to 408 residues: Broad specificity amino-acid racemase (408 aa).

Residues 1–24 form the signal peptide; it reads MNFKKTLLSIAIASASLTPAFSYS. Cys71 and Cys97 are disulfide-bonded. Lys75 functions as the Proton acceptor in the catalytic mechanism. The residue at position 75 (Lys75) is an N6-(pyridoxal phosphate)lysine. Arg174 contacts substrate. Tyr300 functions as the Proton acceptor in the catalytic mechanism. Met348 is a substrate binding site.

It belongs to the alanine racemase family. Bsr subfamily. The cofactor is pyridoxal 5'-phosphate.

It is found in the periplasm. It carries out the reaction an L-alpha-amino acid = a D-alpha-amino acid. The catalysed reaction is L-lysine = D-lysine. The enzyme catalyses L-arginine = D-arginine. Functionally, amino-acid racemase able to utilize a broad range of substrates. This Vibrio vulnificus (strain CMCP6) protein is Broad specificity amino-acid racemase (alr).